A 264-amino-acid chain; its full sequence is Undecaprenyl-diphosphatase (264 aa).

Transmembrane regions (helical) follow at residues 15–37 (GLTEFLPVSSTGHLIITGHLLGF), 42–62 (AASFEVAIQLGAILAVVVLYW), 84–104 (YLLFLTSLPASVLGLLAHDFI), 108–128 (LFNPYTVAWALGVGAIMILIV), 143–163 (VTPKLALGIGCFQCLALWPGF), 182–202 (IAAEYSFIAAVPIMFAATGYD), 217–237 (FLAVGFIVSFLSAWAAVKGFI), and 243–263 (LTLRPFAYYRLALAPLVLFFW).

Belongs to the UppP family.

It is found in the cell inner membrane. It carries out the reaction di-trans,octa-cis-undecaprenyl diphosphate + H2O = di-trans,octa-cis-undecaprenyl phosphate + phosphate + H(+). Catalyzes the dephosphorylation of undecaprenyl diphosphate (UPP). Confers resistance to bacitracin. The chain is Undecaprenyl-diphosphatase from Maridesulfovibrio salexigens (strain ATCC 14822 / DSM 2638 / NCIMB 8403 / VKM B-1763) (Desulfovibrio salexigens).